A 601-amino-acid polypeptide reads, in one-letter code: Glutamine--fructose-6-phosphate aminotransferase [isomerizing] (601 aa).

The active-site Nucleophile; for GATase activity is Cys-2. Residues 2 to 214 (CGITGYIGTD…NGDIAHLTET (213 aa)) form the Glutamine amidotransferase type-2 domain. SIS domains follow at residues 281-420 (STET…ARNA) and 453-591 (IGRE…IDKP). Residue Lys-596 is the For Fru-6P isomerization activity of the active site.

Homodimer.

It localises to the cytoplasm. The catalysed reaction is D-fructose 6-phosphate + L-glutamine = D-glucosamine 6-phosphate + L-glutamate. Its function is as follows. Catalyzes the first step in hexosamine metabolism, converting fructose-6P into glucosamine-6P using glutamine as a nitrogen source. This Halobacterium salinarum (strain ATCC 700922 / JCM 11081 / NRC-1) (Halobacterium halobium) protein is Glutamine--fructose-6-phosphate aminotransferase [isomerizing].